The sequence spans 289 residues: Polyamine aminopropyltransferase (289 aa).

The PABS domain maps to 5–245; the sequence is PGPIVLVEPL…YAVNYILGSL (241 aa). Gln-36 lines the S-methyl-5'-thioadenosine pocket. Spermidine is bound by residues His-67 and Glu-91. S-methyl-5'-thioadenosine-binding positions include Asp-111 and 143 to 144; that span reads DG. The active-site Proton acceptor is the Asp-164.

The protein belongs to the spermidine/spermine synthase family. As to quaternary structure, homodimer or homotetramer.

Its subcellular location is the cytoplasm. The catalysed reaction is S-adenosyl 3-(methylsulfanyl)propylamine + putrescine = S-methyl-5'-thioadenosine + spermidine + H(+). It participates in amine and polyamine biosynthesis; spermidine biosynthesis; spermidine from putrescine: step 1/1. Its function is as follows. Catalyzes the irreversible transfer of a propylamine group from the amino donor S-adenosylmethioninamine (decarboxy-AdoMet) to putrescine (1,4-diaminobutane) to yield spermidine. The polypeptide is Polyamine aminopropyltransferase (Pyrobaculum arsenaticum (strain DSM 13514 / JCM 11321 / PZ6)).